The sequence spans 105 residues: Integration host factor subunit beta (105 aa).

Belongs to the bacterial histone-like protein family. As to quaternary structure, heterodimer of an alpha and a beta chain.

Functionally, this protein is one of the two subunits of integration host factor, a specific DNA-binding protein that functions in genetic recombination as well as in transcriptional and translational control. This chain is Integration host factor subunit beta, found in Bradyrhizobium sp. (strain ORS 278).